Here is a 217-residue protein sequence, read N- to C-terminus: Phosphoribosylformylglycinamidine synthase subunit PurQ (217 aa).

The Glutamine amidotransferase type-1 domain occupies 2-217; sequence NIGIIVFPGS…GKSILSTLLS (216 aa). The active-site Nucleophile is the cysteine 86. Active-site residues include histidine 194 and glutamate 196.

In terms of assembly, part of the FGAM synthase complex composed of 1 PurL, 1 PurQ and 2 PurS subunits.

The protein resides in the cytoplasm. It carries out the reaction N(2)-formyl-N(1)-(5-phospho-beta-D-ribosyl)glycinamide + L-glutamine + ATP + H2O = 2-formamido-N(1)-(5-O-phospho-beta-D-ribosyl)acetamidine + L-glutamate + ADP + phosphate + H(+). The enzyme catalyses L-glutamine + H2O = L-glutamate + NH4(+). Its pathway is purine metabolism; IMP biosynthesis via de novo pathway; 5-amino-1-(5-phospho-D-ribosyl)imidazole from N(2)-formyl-N(1)-(5-phospho-D-ribosyl)glycinamide: step 1/2. Its function is as follows. Part of the phosphoribosylformylglycinamidine synthase complex involved in the purines biosynthetic pathway. Catalyzes the ATP-dependent conversion of formylglycinamide ribonucleotide (FGAR) and glutamine to yield formylglycinamidine ribonucleotide (FGAM) and glutamate. The FGAM synthase complex is composed of three subunits. PurQ produces an ammonia molecule by converting glutamine to glutamate. PurL transfers the ammonia molecule to FGAR to form FGAM in an ATP-dependent manner. PurS interacts with PurQ and PurL and is thought to assist in the transfer of the ammonia molecule from PurQ to PurL. The chain is Phosphoribosylformylglycinamidine synthase subunit PurQ from Prochlorococcus marinus (strain NATL2A).